We begin with the raw amino-acid sequence, 301 residues long: Putative F-box/LRR-repeat protein 19 (301 aa).

One can recognise an F-box domain in the interval 18–66 (PDWSELTRECLLDIFSRLSQEQRWIGPMLVSKNWMNACYDPTLNTIFDL). LRR repeat units lie at residues 108 to 133 (IRHC…WIKN), 134 to 159 (CPNV…DISY), 160 to 185 (SYGI…KRNL), 231 to 256 (YSTL…DLRG), and 257 to 282 (CISL…IKPD).

This chain is Putative F-box/LRR-repeat protein 19 (FBL19), found in Arabidopsis thaliana (Mouse-ear cress).